Here is a 466-residue protein sequence, read N- to C-terminus: Glutamate--tRNA ligase 2 (466 aa).

The short motif at 9 to 19 (PSPTGSLHLGG) is the 'HIGH' region element. The short motif at 236–240 (KLSKR) is the 'KMSKS' region element. Lys-239 is an ATP binding site.

Belongs to the class-I aminoacyl-tRNA synthetase family. Glutamate--tRNA ligase type 1 subfamily. As to quaternary structure, monomer.

The protein resides in the cytoplasm. The enzyme catalyses tRNA(Glu) + L-glutamate + ATP = L-glutamyl-tRNA(Glu) + AMP + diphosphate. Functionally, catalyzes the attachment of glutamate to tRNA(Glu) in a two-step reaction: glutamate is first activated by ATP to form Glu-AMP and then transferred to the acceptor end of tRNA(Glu). This Anaplasma marginale (strain St. Maries) protein is Glutamate--tRNA ligase 2.